Here is a 485-residue protein sequence, read N- to C-terminus: Aprataxin and PNK-like factor (485 aa).

An FHA-like domain is found at 1 to 84 (MSGGFELQPQ…CVLSTHSEME (84 aa)). Ser-92 is modified (phosphoserine; by ATM). The segment at 103 to 156 (EIPKSSSADLPDKTPSAPRRERSTETAKPQAAANNMSFIGESRDLSKQQPNPSE) is disordered. A Phosphoserine modification is found at Ser-125. The KBM motif lies at 157-166 (RKRILPAWML). Residues 206–348 (GKKRLISSGS…VPNGSEENKV (143 aa)) are disordered. Polar residues-rich tracts occupy residues 212–223 (SSGSSESTSAKQ), 237–249 (SIIS…QSFS), and 286–309 (KGSS…QSKS). Basic and acidic residues predominate over residues 310–319 (FCDKPQKSHP). The a glycoprotein site is built by Arg-350, Tyr-355, Tyr-360, and Arg-361. The PBZ-type 1 zinc finger occupies 351-372 (TSCMYGANCYRKNPVHFQHFSH). The tract at residues 380–390 (GVNITCQDEAD) is flexible linker. A PBZ-type 2 zinc finger spans residues 393–414 (PECPYGASCYRKNPQHKIEYRH). 3 residues coordinate a glycoprotein: Tyr-397, Tyr-402, and Arg-403. Residues 420 to 470 (RSISDEDDNVGQPNEYNLNDSFIDDEEEEYEPTDEDSDWEPEKEDLEKEDM) form a disordered region. Positions 441–469 (FIDDEEEEYEPTDEDSDWEPEKEDLEKED) are enriched in acidic residues. An NAP1L motif motif is present at residues 449–473 (YEPTDEDSDWEPEKEDLEKEDMEGL).

Belongs to the APLF family. As to quaternary structure, interacts with LIG4. Interacts with PARP1. Interacts with XRCC4. Interacts (via KBM motif) with XRCC5 and XRCC6; promoting recruitment to DNA damage sites. Interacts with XRCC1. Interacts (via C-terminal disordered region) with histones; interacts with histone H2A, H2B and H3-H4. In terms of processing, poly-ADP-ribosylated. In addition to binding non covalently poly-ADP-ribose via its PBZ-type zinc fingers, the protein is also covalently poly-ADP-ribosylated by PARP1. Post-translationally, phosphorylated in an ATM-dependent manner upon double-strand DNA break.

It is found in the nucleus. The protein localises to the chromosome. It localises to the cytoplasm. Its subcellular location is the cytosol. Histone chaperone involved in single-strand and double-strand DNA break repair. Recruited to sites of DNA damage through interaction with branched poly-ADP-ribose chains, a polymeric post-translational modification synthesized transiently at sites of chromosomal damage to accelerate DNA strand break repair reactions. Following recruitment to DNA damage sites, acts as a histone chaperone that mediates histone eviction during DNA repair and promotes recruitment of histone variant MACROH2A1. Also has a nuclease activity: displays apurinic-apyrimidinic (AP) endonuclease and 3'-5' exonuclease activities in vitro. Also able to introduce nicks at hydroxyuracil and other types of pyrimidine base damage. Together with PARP3, promotes the retention of the LIG4-XRCC4 complex on chromatin and accelerate DNA ligation during non-homologous end-joining (NHEJ). Also acts as a negative regulator of cell pluripotency by promoting histone exchange. Required for the embryo implantation during the epithelial to mesenchymal transition in females. This is Aprataxin and PNK-like factor (APLF) from Bos taurus (Bovine).